We begin with the raw amino-acid sequence, 186 residues long: T-cell receptor-associated transmembrane adapter 1 (186 aa).

Residues 1-7 lie on the Extracellular side of the membrane; it reads MSGISGC. The helical; Signal-anchor for type III membrane protein transmembrane segment at 8–28 threads the bilayer; that stretch reads PFFLWGLLALLGLALVISLIF. Topologically, residues 29 to 186 are cytoplasmic; sequence NISHYVEKQR…LIRAKREPIN (158 aa). Position 46 is a phosphoserine (Ser-46). Position 79 is a phosphotyrosine (Tyr-79). Residues 79–82 form an interaction with PIK3R1 region; sequence YEQM. The disordered stretch occupies residues 116-140; sequence SVKGKRRKPRKQNTHFSDKDGDEQL. Residues 118 to 128 are compositionally biased toward basic residues; it reads KGKRRKPRKQN. Residues 131–140 show a composition bias toward basic and acidic residues; that stretch reads FSDKDGDEQL.

In terms of assembly, homodimer; disulfide-linked. Interacts with CD3Z. When phosphorylated, interacts with PIK3R1. Post-translationally, phosphorylated on tyrosines by LCK or FYN upon TCR activation. Strongly expressed in thymus, and to a lesser extent in spleen, lymph node and peripheral blood lymphocytes. Present in T-cells and NK cells, but not B-cells (at protein level).

Its subcellular location is the cell membrane. In terms of biological role, stabilizes the TCR (T-cell antigen receptor)/CD3 complex at the surface of T-cells. In Homo sapiens (Human), this protein is T-cell receptor-associated transmembrane adapter 1 (TRAT1).